The sequence spans 610 residues: Isocitrate dehydrogenase kinase/phosphatase (610 aa).

ATP contacts are provided by residues 359–365 (APGFKGT) and K380. Residue D419 is part of the active site.

The protein belongs to the AceK family.

Its subcellular location is the cytoplasm. It carries out the reaction L-seryl-[isocitrate dehydrogenase] + ATP = O-phospho-L-seryl-[isocitrate dehydrogenase] + ADP + H(+). Bifunctional enzyme which can phosphorylate or dephosphorylate isocitrate dehydrogenase (IDH) on a specific serine residue. This is a regulatory mechanism which enables bacteria to bypass the Krebs cycle via the glyoxylate shunt in response to the source of carbon. When bacteria are grown on glucose, IDH is fully active and unphosphorylated, but when grown on acetate or ethanol, the activity of IDH declines drastically concomitant with its phosphorylation. This is Isocitrate dehydrogenase kinase/phosphatase from Rhodopseudomonas palustris (strain TIE-1).